The sequence spans 250 residues: uncharacterized protein (250 aa).

Positions 1–19 (MAKPRNAAESKAAKAQANA) are cleaved as a signal peptide. Transmembrane regions (helical) follow at residues 51 to 71 (IGAFLLIVGASVGVGVWAGGF) and 73 to 93 (MFTMIPLGVLLGALVAFVIFG). The segment at 226–250 (AGVMPKGPLPTTAKMRSVQRTVRRK) is disordered.

It is found in the cell membrane. This is an uncharacterized protein from Mycobacterium tuberculosis (strain CDC 1551 / Oshkosh).